The primary structure comprises 303 residues: Protoheme IX farnesyltransferase (303 aa).

The next 6 helical transmembrane spans lie at Met25–Met45, Ile54–Leu74, Cys118–Val138, Ile166–Val186, Leu230–Ile250, and Phe280–Ile300.

It belongs to the UbiA prenyltransferase family. Protoheme IX farnesyltransferase subfamily. As to quaternary structure, interacts with CtaA.

It is found in the cell membrane. It carries out the reaction heme b + (2E,6E)-farnesyl diphosphate + H2O = Fe(II)-heme o + diphosphate. The protein operates within porphyrin-containing compound metabolism; heme O biosynthesis; heme O from protoheme: step 1/1. Functionally, converts heme B (protoheme IX) to heme O by substitution of the vinyl group on carbon 2 of heme B porphyrin ring with a hydroxyethyl farnesyl side group. This chain is Protoheme IX farnesyltransferase, found in Staphylococcus epidermidis (strain ATCC 12228 / FDA PCI 1200).